The following is a 30-amino-acid chain: NLYQFKNMVQCVGTQLCVAYVKYGCYCGPG.

Ca(2+) is bound by residues Tyr-26, Gly-28, and Gly-30.

Belongs to the phospholipase A2 family. Group I subfamily. In terms of assembly, homodimer. Ca(2+) serves as cofactor. In terms of processing, glycosylated. As to expression, expressed by the venom gland.

It is found in the secreted. It catalyses the reaction a 1,2-diacyl-sn-glycero-3-phosphocholine + H2O = a 1-acyl-sn-glycero-3-phosphocholine + a fatty acid + H(+). With respect to regulation, enzymatic activity is diminished by Cd(2+) and Hg(2+). Relatively highly potent phospholipase A2 that displays potent antimicrobial and hemolytic activities. It does not show cytotoxic effects on the three human cell lines tested. PLA2 catalyzes the calcium-dependent hydrolysis of the 2-acyl groups in 3-sn-phosphoglycerides. It shows similar potencies on both Gram-negative and Gram-positive bacteria: B.cereus (MIC&gt;9 ug/ml), B.subtilis (MIC&gt;12 ug/ml), E.faecalis (MIC&gt;7 ug/ml), S.epidermidis (MIC&gt;12 ug/ml), S.aureux (MIC&gt;5 ug/ml), E.coli (MIC&gt;7 ug/ml), K.pneumonia (MIC&gt;8 ug/ml), P.aeruginosa (MIC&gt;10 ug/ml), and S.enteric (MIC&gt;9 ug/ml). It also shows antifungal activities: A.niger (MIC&gt;15 ug/ml), B.cinerea (MIC&gt;12 ug/ml), F.solani (MIC&gt;15 ug/ml), and P.digitatum (MIC&gt;10 ug/ml). In Walterinnesia aegyptia (Desert black snake), this protein is Non-toxic phospholipase A2.